Reading from the N-terminus, the 348-residue chain is NADH-quinone oxidoreductase subunit H (348 aa).

8 helical membrane-spanning segments follow: residues 21-41 (IAGILLIALPVMLAVAMVIYV), 87-107 (GIFLLAPIVTFVVALVAWAVI), 120-140 (VGLLYVLAISSLGVYGIVMAG), 166-186 (IGFILICVVLWAGTFNLSEIV), 195-215 (GIVNGYFFNILLFPMWVLFFI), 258-278 (NILLLCSLNTVLFFGGWLPPI), 288-308 (GFLWFLIKTFLFFFMFSWIWA), and 325-345 (VFLPMSLLFVFLISGYLMATG).

The protein belongs to the complex I subunit 1 family. NDH-1 is composed of 14 different subunits. Subunits NuoA, H, J, K, L, M, N constitute the membrane sector of the complex.

Its subcellular location is the cell inner membrane. It carries out the reaction a quinone + NADH + 5 H(+)(in) = a quinol + NAD(+) + 4 H(+)(out). In terms of biological role, NDH-1 shuttles electrons from NADH, via FMN and iron-sulfur (Fe-S) centers, to quinones in the respiratory chain. The immediate electron acceptor for the enzyme in this species is believed to be ubiquinone. Couples the redox reaction to proton translocation (for every two electrons transferred, four hydrogen ions are translocated across the cytoplasmic membrane), and thus conserves the redox energy in a proton gradient. This subunit may bind ubiquinone. This is NADH-quinone oxidoreductase subunit H from Erythrobacter litoralis (strain HTCC2594).